The chain runs to 229 residues: uncharacterized protein (229 aa).

Positions 1 to 102 (MKLLGRKKSY…AASKAQITDR (102 aa)) are disordered. Residues 73 to 94 (ARRKSLAPPKCHRAERRAKRAA) are compositionally biased toward basic residues. 2 helical membrane-spanning segments follow: residues 137 to 157 (LGLF…VPQL) and 159 to 179 (LYMS…GIIL).

It is found in the cell membrane. This is an uncharacterized protein from Mycobacterium leprae (strain TN).